Reading from the N-terminus, the 589-residue chain is Kelch-like protein diablo (589 aa).

A disordered region spans residues 1 to 22 (MGDVLISDRPPSPARLSHTSEK). In terms of domain architecture, BTB spans 41 to 108 (CDVVINVSGR…CYTSHIVVEE (68 aa)). One can recognise a BACK domain in the interval 143-245 (CLGIRAFADT…SPKFLVGTVG (103 aa)). Kelch repeat units lie at residues 292–338 (VLFA…VLND), 340–386 (LYAV…VLDG), 387–433 (FLYA…VLGG), 435–480 (LYAI…VFNN), 482–527 (IYAV…VVNG), and 528–574 (QLYA…VMRA).

It functions in the pathway protein modification; protein ubiquitination. Probable substrate-specific adapter of an E3 ubiquitin-protein ligase complex which mediates the ubiquitination and subsequent proteasomal degradation of target proteins. May have a role in synapse differentiation and growth. The chain is Kelch-like protein diablo from Aedes aegypti (Yellowfever mosquito).